The primary structure comprises 433 residues: Monodehydroascorbate reductase (433 aa).

FAD is bound by residues 13-16 (GGVS), glutamate 40, arginine 47, lysine 52, isoleucine 95, and 146-147 (RE). Residues 171-177 (GGYIGLE), glutamate 195, arginine 201, and glycine 260 contribute to the NAD(+) site. 173–177 (YIGLE) contributes to the NADP(+) binding site. Arginine 201 and glycine 260 together coordinate NADP(+). FAD is bound at residue aspartate 297. 313 to 314 (EH) is a binding site for NAD(+). 313–314 (EH) contacts NADP(+). Valine 315 is a binding site for FAD. Arginine 319 is a binding site for L-ascorbate. FAD is bound at residue tyrosine 348. Position 348 (tyrosine 348) interacts with NAD(+). NADP(+) is bound at residue tyrosine 348. Arginine 350 is an L-ascorbate binding site.

It belongs to the FAD-dependent oxidoreductase family. The cofactor is FAD. Expressed in leaves, and to a lesser degree in stems, roots and all stages of fruit.

The protein resides in the cytoplasm. It carries out the reaction 2 monodehydro-L-ascorbate radical + NADH + H(+) = 2 L-ascorbate + NAD(+). Functionally, catalyzes the conversion of monodehydroascorbate to ascorbate, oxidizing NADH in the process. The polypeptide is Monodehydroascorbate reductase (Solanum lycopersicum (Tomato)).